The chain runs to 291 residues: Insulin-like growth factor-binding protein 3 (291 aa).

A signal peptide spans 1–27; it reads MQRARPTLWAAALTLLVLLRGPPVARA. The interval 28–134 is IGF-binding; it reads GASSAGLGPV…AYLLPAPPAP (107 aa). Residues 36-117 form the IGFBP N-terminal domain; sequence PVVRCEPCDA…LDGRGLCVNA (82 aa). Intrachain disulfides connect C40-C67, C43-C69, C51-C70, C58-C73, C81-C94, and C88-C114. N-linked (GlcNAc...) (complex) asparagine glycosylation is found at N116 and N136. Disordered regions lie at residues 130–162 and 189–211; these read APPA…RVSD and DYES…TEYG. Low complexity predominate over residues 146 to 156; it reads AGSVESPSVSS. Residue S148 is modified to Phosphoserine; by FAM20C. Residues 191–202 are compositionally biased toward polar residues; sequence ESQSTDTQNFSS. Position 194 is a phosphoserine; by CK2 (S194). A glycan (N-linked (GlcNAc...) (complex) asparagine) is linked at N199. S201 carries the phosphoserine; by FAM20C modification. Position 202 is a phosphoserine; by CK2 (S202). The Thyroglobulin type-1 domain occupies 210 to 285; the sequence is YGPCRREMED…TTKGKEDVHC (76 aa). Intrachain disulfides connect C213–C240, C251–C262, and C264–C285.

Interacts with XLKD1. Binds IGF2 more than IGF1. Forms a ternary complex of about 140 to 150 kDa with IGF1 or IGF2 and a 85 kDa glycoprotein (ALS). Interacts with humanin; humanin competes with importin KPNB1 for binding to IGFBP3, blocking IGFBP3 nuclear import and IGFBP3-mediated apoptosis. Interacts with TMEM219. Interacts with RXRA; this interaction modulates the transcriptional activity of RXRA. Interacts with LRP1; this interaction mediates cell growth inhibition independent of IGF1. Post-translationally, phosphorylated by FAM20C in the extracellular medium. Phosphorylated by CK2; resulting in decreased nuclear localization. Expressed by most tissues. Present in plasma.

The protein resides in the secreted. The protein localises to the nucleus. Functionally, multifunctional protein that plays a critical role in regulating the availability of IGFs such as IGF1 and IGF2 to their receptors and thereby regulates IGF-mediated cellular processes including proliferation, differentiation, and apoptosis in a cell-type specific manner. Also exhibits IGF-independent antiproliferative and apoptotic effects mediated by its receptor TMEM219/IGFBP-3R. Inhibits the positive effect of humanin on insulin sensitivity. Promotes testicular germ cell apoptosis. Acts via LRP-1/alpha2M receptor, also known as TGF-beta type V receptor, to mediate cell growth inhibition independent of IGF1. Mechanistically, induces serine-specific dephosphorylation of IRS1 or IRS2 upon ligation to its receptor, leading to the inhibitory cascade. In the nucleus, interacts with transcription factors such as retinoid X receptor-alpha/RXRA to regulate transcriptional signaling and apoptosis. In Homo sapiens (Human), this protein is Insulin-like growth factor-binding protein 3 (IGFBP3).